Reading from the N-terminus, the 201-residue chain is 3-isopropylmalate dehydratase small subunit (201 aa).

It belongs to the LeuD family. LeuD type 1 subfamily. In terms of assembly, heterodimer of LeuC and LeuD.

The enzyme catalyses (2R,3S)-3-isopropylmalate = (2S)-2-isopropylmalate. Its pathway is amino-acid biosynthesis; L-leucine biosynthesis; L-leucine from 3-methyl-2-oxobutanoate: step 2/4. Functionally, catalyzes the isomerization between 2-isopropylmalate and 3-isopropylmalate, via the formation of 2-isopropylmaleate. This Sinorhizobium medicae (strain WSM419) (Ensifer medicae) protein is 3-isopropylmalate dehydratase small subunit.